The following is a 124-amino-acid chain: Small ribosomal subunit protein uS13 (124 aa).

Residues Val98 to Lys124 form a disordered region.

It belongs to the universal ribosomal protein uS13 family. As to quaternary structure, part of the 30S ribosomal subunit. Forms a loose heterodimer with protein S19. Forms two bridges to the 50S subunit in the 70S ribosome.

Functionally, located at the top of the head of the 30S subunit, it contacts several helices of the 16S rRNA. In the 70S ribosome it contacts the 23S rRNA (bridge B1a) and protein L5 of the 50S subunit (bridge B1b), connecting the 2 subunits; these bridges are implicated in subunit movement. Contacts the tRNAs in the A and P-sites. In Dictyoglomus thermophilum (strain ATCC 35947 / DSM 3960 / H-6-12), this protein is Small ribosomal subunit protein uS13.